We begin with the raw amino-acid sequence, 489 residues long: Cysteine--tRNA ligase (489 aa).

A Zn(2+)-binding site is contributed by Cys-29. The short motif at 31 to 41 (VTVYDYCHLGH) is the 'HIGH' region element. Zn(2+)-binding residues include Cys-215, His-240, and Glu-244. Positions 272-276 (KMSKS) match the 'KMSKS' region motif. Lys-275 is an ATP binding site.

The protein belongs to the class-I aminoacyl-tRNA synthetase family. As to quaternary structure, monomer. Zn(2+) is required as a cofactor.

Its subcellular location is the cytoplasm. The enzyme catalyses tRNA(Cys) + L-cysteine + ATP = L-cysteinyl-tRNA(Cys) + AMP + diphosphate. This Trichodesmium erythraeum (strain IMS101) protein is Cysteine--tRNA ligase.